The sequence spans 141 residues: Nucleoside diphosphate kinase (141 aa).

The ATP site is built by Lys-11, Phe-59, Arg-87, Thr-93, Arg-104, and Asn-114. The Pros-phosphohistidine intermediate role is filled by His-117.

It belongs to the NDK family. In terms of assembly, homotetramer. The cofactor is Mg(2+).

Its subcellular location is the cytoplasm. It catalyses the reaction a 2'-deoxyribonucleoside 5'-diphosphate + ATP = a 2'-deoxyribonucleoside 5'-triphosphate + ADP. It carries out the reaction a ribonucleoside 5'-diphosphate + ATP = a ribonucleoside 5'-triphosphate + ADP. Major role in the synthesis of nucleoside triphosphates other than ATP. The ATP gamma phosphate is transferred to the NDP beta phosphate via a ping-pong mechanism, using a phosphorylated active-site intermediate. The sequence is that of Nucleoside diphosphate kinase from Paraburkholderia phytofirmans (strain DSM 17436 / LMG 22146 / PsJN) (Burkholderia phytofirmans).